A 307-amino-acid chain; its full sequence is Estrogen receptor (307 aa).

Positions Gly-1–Lys-43 form a DNA-binding region, nuclear receptor. The segment at Cys-7 to Cys-31 adopts an NR C4-type zinc-finger fold. Residues Asp-44–Leu-95 form a hinge region. The NR LBD domain occupies Thr-96 to Met-307.

The protein belongs to the nuclear hormone receptor family. NR3 subfamily. Binds DNA as a homodimer. Can form a heterodimer with ER-beta.

The protein resides in the nucleus. Functionally, the steroid hormones and their receptors are involved in the regulation of eukaryotic gene expression and affect cellular proliferation and differentiation in target tissues. The protein is Estrogen receptor (ESR1) of Aspidoscelis uniparens (Desert grassland whiptail lizard).